Consider the following 441-residue polypeptide: Probable pyridine nucleotide-disulfide oxidoreductase RclA (441 aa).

33–43 (EQSNAMYGGTC) is a binding site for FAD. C43 and C48 form a disulfide bridge. Catalysis depends on H426, which acts as the Proton acceptor.

Belongs to the class-I pyridine nucleotide-disulfide oxidoreductase family. The cofactor is FAD.

In terms of biological role, probably involved in reactive chlorine species (RCS) stress resistance. The sequence is that of Probable pyridine nucleotide-disulfide oxidoreductase RclA (rclA) from Escherichia coli (strain K12).